Consider the following 450-residue polypeptide: Solute carrier family 52, riboflavin transporter, member 2 (450 aa).

The next 5 helical transmembrane spans lie at 14–34 (LLVA…WVEL), 47–67 (LPSY…LVTL), 79–99 (IPIQ…APLW), 114–136 (FLTL…LPFL), and 147–167 (FFLG…AQGV). Asparagine 178 carries an N-linked (GlcNAc...) asparagine glycan. The helical transmembrane segment at 201-221 (FFWVLTALLGTSAAAFQGLLL) threads the bilayer. Positions 230-268 (ATMGTGLRVETPGTEEEEEEEEASPLQEPPGQVASIVSS) are disordered. Positions 242 to 252 (GTEEEEEEEEA) are enriched in acidic residues. Helical transmembrane passes span 282-302 (ACLL…LPAV), 317-337 (LAVV…MAVL), 344-364 (LYGL…LAVL), 371-391 (VGTS…AGVF), and 409-429 (ALLA…IAMF).

Belongs to the riboflavin transporter family. Highly expressed in the placenta and small intestine, moderately in the kidney, colon, lung, prostate, uterus, and thymus, and weakly in all other tissues.

Its subcellular location is the cell membrane. It carries out the reaction riboflavin(in) = riboflavin(out). With respect to regulation, riboflavin transport is Na(+)-independent but moderately pH-sensitive. Activity is strongly inhibited by riboflavin analogs, such as lumiflavin. Weakly inhibited by flavin adenine dinucleotide (FAD) and flavin mononucleotide (FMN). Plasma membrane transporter mediating the uptake by cells of the water soluble vitamin B2/riboflavin that plays a key role in biochemical oxidation-reduction reactions of the carbohydrate, lipid, and amino acid metabolism. May also act as a receptor for 4-hydroxybutyrate. The chain is Solute carrier family 52, riboflavin transporter, member 2 (Slc52a2) from Rattus norvegicus (Rat).